The sequence spans 421 residues: Protein PHLOEM UNLOADING MODULATOR (421 aa).

7 consecutive transmembrane segments (helical) span residues 30 to 50, 60 to 80, 124 to 144, 158 to 178, 286 to 306, 323 to 343, and 397 to 417; these read LMPV…LFYK, IPFL…ALCV, HIIG…SVVF, YIFT…STIL, AMAW…LFVA, CIVA…IWSA, and TVFA…ALTL.

It belongs to the sphingomyelin synthase family.

It localises to the membrane. It functions in the pathway sphingolipid metabolism. In terms of biological role, catalyzes the biosynthesis of sphingolipids with very long-chain fatty acid (VLCFA). Required for the formation of plasmodesmal cytoplasmic sleeve during the transition from type I to type II plasmodesmata to modulate post-sieve elements (SE) unloading and symplastic cell-to-cell molecular trafficking at the phloem pole pericycle (PPP)-endodermis interface in roots. The polypeptide is Protein PHLOEM UNLOADING MODULATOR (Arabidopsis thaliana (Mouse-ear cress)).